Consider the following 151-residue polypeptide: Ribosome maturation factor RimP (151 aa).

The protein belongs to the RimP family.

It localises to the cytoplasm. Required for maturation of 30S ribosomal subunits. The polypeptide is Ribosome maturation factor RimP (Vibrio campbellii (strain ATCC BAA-1116)).